The chain runs to 500 residues: Formate-nitrite transporter 3 (500 aa).

The Cytoplasmic segment spans residues 1 to 31 (MVLAASPEAYRKVIEYGIKKTKLRIDRLFLQ). The chain crosses the membrane as a helical span at residues 32 to 52 (AIMAGIYVGMAGHACTALAGA). Residues 53–69 (YSTDPANPLAVSKATQK) lie on the Extracellular side of the membrane. Residues 70 to 90 (FLYASLFPVAFIAIIFTGAEL) form a helical membrane-spanning segment. Residues 91–113 (FTGNTMTMLVCLLERRVTALQLC) are Cytoplasmic-facing. Residues 114–134 (INWICSLVGNWAGALFAAYFL) traverse the membrane as a helical segment. The Extracellular segment spans residues 135 to 164 (SYLPGVLQDPDHLHYLEDVAAHKTELSFLQ). The helical transmembrane segment at 165 to 185 (CFCLAVGCNTFVCLAVWFVIA) threads the bilayer. Topologically, residues 186-192 (SDDAAGK) are cytoplasmic. A helical membrane pass occupies residues 193 to 213 (IMSMWFPIVSFCVAGYEHIIA). The Extracellular portion of the chain corresponds to 214-237 (NFYTLQCALMHGVGPGVGTVILKN). Residues 238–258 (FIPTLLGNIVGGCGLVGAVYW) form a helical membrane-spanning segment. The Cytoplasmic portion of the chain corresponds to 259–500 (YNFYPTVCVV…ALEEHPASTI (242 aa)). Residues 411 to 500 (PLRENSGVPS…ALEEHPASTI (90 aa)) form a disordered region. 2 stretches are compositionally biased toward basic and acidic residues: residues 428-444 (GRVR…RGGE) and 466-485 (FHPH…ETRV).

The protein belongs to the FNT transporter (TC 1.A.16) family. Homopentamer.

The protein localises to the cell membrane. It carries out the reaction (S)-lactate(in) + H(+)(in) = (S)-lactate(out) + H(+)(out). It catalyses the reaction formate(in) + H(+)(in) = formate(out) + H(+)(out). The catalysed reaction is pyruvate(out) + H(+)(out) = pyruvate(in) + H(+)(in). The enzyme catalyses acetate(out) + H(+)(out) = acetate(in) + H(+)(in). Its activity is regulated as follows. Inhibited by p-chloromercuribenzene sulfonate (pCMBS). Methyl methanethiosulfonate (MMTS) inhibits L-lactate but not formate transport. Inhibited by the Malaria Box compound MMV007839. Inhibited by BH-296, BH-317, BH-326 and BH-388 compounds. Functionally, monocarboxylate-proton symporter; active in acidic-to-neutral pH range. Transports L-lactate and formate. In Toxoplasma gondii (strain ATCC 50611 / Me49), this protein is Formate-nitrite transporter 3.